The sequence spans 182 residues: Small ribosomal subunit protein uS4c (182 aa).

An S4 RNA-binding domain is found at 82 to 143; it reads MRLDNILFRL…KERSKVLIQN (62 aa).

The protein belongs to the universal ribosomal protein uS4 family. As to quaternary structure, part of the 30S ribosomal subunit. Contacts protein S5. The interaction surface between S4 and S5 is involved in control of translational fidelity.

The protein resides in the plastid. It is found in the chloroplast. Functionally, one of the primary rRNA binding proteins, it binds directly to 16S rRNA where it nucleates assembly of the body of the 30S subunit. With S5 and S12 plays an important role in translational accuracy. In Tigridia sp. (strain Lejeune 1997), this protein is Small ribosomal subunit protein uS4c (rps4).